The sequence spans 677 residues: Methionine--tRNA ligase (677 aa).

Residues 15 to 25 carry the 'HIGH' region motif; it reads PYANGSIHLGH. Cys146, Cys149, Cys159, and Cys162 together coordinate Zn(2+). Positions 333–337 match the 'KMSKS' region motif; it reads KMSKS. Lys336 contributes to the ATP binding site. The tRNA-binding domain maps to 575–677; sequence DFAKVDLRVA…EGAKPGQQVK (103 aa).

Belongs to the class-I aminoacyl-tRNA synthetase family. MetG type 1 subfamily. As to quaternary structure, homodimer. Zn(2+) is required as a cofactor.

It is found in the cytoplasm. The catalysed reaction is tRNA(Met) + L-methionine + ATP = L-methionyl-tRNA(Met) + AMP + diphosphate. Its function is as follows. Is required not only for elongation of protein synthesis but also for the initiation of all mRNA translation through initiator tRNA(fMet) aminoacylation. The polypeptide is Methionine--tRNA ligase (Enterobacter sp. (strain 638)).